Consider the following 264-residue polypeptide: Agamous-like MADS-box protein AGL61 (264 aa).

The region spanning Ile-62–Ser-122 is the MADS-box domain.

As to quaternary structure, interacts with PHE1/AGL37, PHE2/AGL38, AGL80 and AGL86. Forms a heterodimer with AGL80. In terms of tissue distribution, expressed exclusively in the central cell of the female gametophyte and in early endosperm.

The protein localises to the nucleus. Its function is as follows. Probable transcription factor. Controls central cell differentiation during female gametophyte development. The sequence is that of Agamous-like MADS-box protein AGL61 (AGL61) from Arabidopsis thaliana (Mouse-ear cress).